The primary structure comprises 239 residues: Large ribosomal subunit protein uL1 (239 aa).

It belongs to the universal ribosomal protein uL1 family. As to quaternary structure, part of the 50S ribosomal subunit.

Its function is as follows. Binds directly to 23S rRNA. The L1 stalk is quite mobile in the ribosome, and is involved in E site tRNA release. Functionally, protein L1 is also a translational repressor protein, it controls the translation of the L11 operon by binding to its mRNA. The protein is Large ribosomal subunit protein uL1 of Rickettsia bellii (strain OSU 85-389).